The following is a 1097-amino-acid chain: DNA-directed RNA polymerase subunit beta (1097 aa).

The tract at residues 1071–1097 (MQDVNPKRNTPSRPTYESLGTSEYAED) is disordered. Polar residues predominate over residues 1077–1091 (KRNTPSRPTYESLGT).

Belongs to the RNA polymerase beta chain family. In terms of assembly, in cyanobacteria the RNAP catalytic core is composed of 2 alpha, 1 beta, 1 beta', 1 gamma and 1 omega subunit. When a sigma factor is associated with the core the holoenzyme is formed, which can initiate transcription.

It carries out the reaction RNA(n) + a ribonucleoside 5'-triphosphate = RNA(n+1) + diphosphate. Its function is as follows. DNA-dependent RNA polymerase catalyzes the transcription of DNA into RNA using the four ribonucleoside triphosphates as substrates. This Prochlorococcus marinus subsp. pastoris (strain CCMP1986 / NIES-2087 / MED4) protein is DNA-directed RNA polymerase subunit beta.